A 463-amino-acid polypeptide reads, in one-letter code: Ribosomal protein uS12 methylthiotransferase RimO (463 aa).

The 116-residue stretch at 15–130 (PKVGMVSLGC…VMQAVHSHLP (116 aa)) folds into the MTTase N-terminal domain. [4Fe-4S] cluster-binding residues include cysteine 24, cysteine 60, cysteine 89, cysteine 161, cysteine 165, and cysteine 168. In terms of domain architecture, Radical SAM core spans 147–392 (LTPRHYAYLK…MEVAEEVSAA (246 aa)). A TRAM domain is found at 395-463 (ARKIGKTLKV…ADGHDLWGEV (69 aa)).

It belongs to the methylthiotransferase family. RimO subfamily. [4Fe-4S] cluster serves as cofactor.

It is found in the cytoplasm. The enzyme catalyses L-aspartate(89)-[ribosomal protein uS12]-hydrogen + (sulfur carrier)-SH + AH2 + 2 S-adenosyl-L-methionine = 3-methylsulfanyl-L-aspartate(89)-[ribosomal protein uS12]-hydrogen + (sulfur carrier)-H + 5'-deoxyadenosine + L-methionine + A + S-adenosyl-L-homocysteine + 2 H(+). Its function is as follows. Catalyzes the methylthiolation of an aspartic acid residue of ribosomal protein uS12. This is Ribosomal protein uS12 methylthiotransferase RimO from Burkholderia mallei (strain NCTC 10229).